The chain runs to 571 residues: Proline--tRNA ligase 1 (571 aa).

This sequence belongs to the class-II aminoacyl-tRNA synthetase family. ProS type 1 subfamily. As to quaternary structure, homodimer.

The protein localises to the cytoplasm. The enzyme catalyses tRNA(Pro) + L-proline + ATP = L-prolyl-tRNA(Pro) + AMP + diphosphate. Catalyzes the attachment of proline to tRNA(Pro) in a two-step reaction: proline is first activated by ATP to form Pro-AMP and then transferred to the acceptor end of tRNA(Pro). As ProRS can inadvertently accommodate and process non-cognate amino acids such as alanine and cysteine, to avoid such errors it has two additional distinct editing activities against alanine. One activity is designated as 'pretransfer' editing and involves the tRNA(Pro)-independent hydrolysis of activated Ala-AMP. The other activity is designated 'posttransfer' editing and involves deacylation of mischarged Ala-tRNA(Pro). The misacylated Cys-tRNA(Pro) is not edited by ProRS. This chain is Proline--tRNA ligase 1, found in Clostridioides difficile (strain 630) (Peptoclostridium difficile).